The sequence spans 2211 residues: Nonribosomal peptide synthetase 13 (2211 aa).

The segment at 76–475 (TYAELDSLSD…IEHHLQLTLP (400 aa)) is adenylation 1. Positions 594-671 (PPSTPKEATI…EQSKRAGLIQ (78 aa)) constitute a Carrier 1 domain. Ser-631 bears the O-(pantetheine 4'-phosphoryl)serine mark. A condensation 1 region spans residues 710 to 975 (EDIYPCTALQ…IATVPTRIRV (266 aa)). Residues 1169–1563 (TYRELWAHSS…LGAVEASVMR (395 aa)) are adenylation 2. Positions 1677–1756 (PMSDDNERRL…RSRHLITEQA (80 aa)) constitute a Carrier 2 domain. At Ser-1714 the chain carries O-(pantetheine 4'-phosphoryl)serine. Positions 1814 to 2069 (HFQFDLSGAV…CTNYIPYRLS (256 aa)) are condensation 2.

The protein belongs to the NRP synthetase family.

It carries out the reaction L-proline + L-tryptophan + 2 ATP = brevianamide F + 2 AMP + 2 diphosphate + 2 H(+). Its pathway is mycotoxin biosynthesis. Functionally, nonribosomal peptide synthetase; part of the gene cluster that mediates the biosynthesis of fumitremorgins, indole alkaloids that carry not only intriguing chemical structures, but also interesting biological and pharmacological activities. The biosynthesis of fumitremorgin-type alkaloids begins by condensation of the two amino acids L-tryptophan and L-proline to brevianamide F, catalyzed by the non-ribosomal peptide synthetase ftmA. Brevianamide F is then prenylated by the prenyltransferase ftmPT1/ftmB in the presence of dimethylallyl diphosphate, resulting in the formation of tryprostatin B. The three cytochrome P450 monooxygenases, ftmP450-1/ftmC, ftmP450-2/ftmE and ftmP450-3/FtmG, are responsible for the conversion of tryprostatin B to 6-hydroxytryprostatin B, tryprostatin A to fumitremorgin C and fumitremorgin C to 12,13-dihydroxyfumitremorgin C, respectively. The putative methyltransferase ftmMT/ftmD is expected for the conversion of 6-hydroxytryprostatin B to tryprostatin A. FtmPT2/FtmH catalyzes the prenylation of 12,13-dihydroxyfumitre-morgin C in the presence of dimethylallyl diphosphate, resulting in the formation of fumitremorgin B. Fumitremorgin B is further converted to verruculogen by ftmOx1/ftmF via the insertion of an endoperoxide bond between the two prenyl moieties. In some fungal species, verruculogen is further converted to fumitremorgin A, but the enzymes involved in this step have not been identified yet. The polypeptide is Nonribosomal peptide synthetase 13 (Aspergillus fumigatus (strain ATCC MYA-4609 / CBS 101355 / FGSC A1100 / Af293) (Neosartorya fumigata)).